The sequence spans 213 residues: Large ribosomal subunit protein uL3 (213 aa).

Residue Gln151 is modified to N5-methylglutamine.

This sequence belongs to the universal ribosomal protein uL3 family. As to quaternary structure, part of the 50S ribosomal subunit. Forms a cluster with proteins L14 and L19. Methylated by PrmB.

One of the primary rRNA binding proteins, it binds directly near the 3'-end of the 23S rRNA, where it nucleates assembly of the 50S subunit. The polypeptide is Large ribosomal subunit protein uL3 (Rhizobium etli (strain CIAT 652)).